Consider the following 178-residue polypeptide: Interleukin-10 (178 aa).

Positions 1 to 18 (MHSSALLCFLVFLAGVGA) are cleaved as a signal peptide. A glycan (N-linked (GlcNAc...) asparagine) is linked at Asn29. Intrachain disulfides connect Cys30–Cys126 and Cys80–Cys132. Asn134 is a glycosylation site (N-linked (GlcNAc...) asparagine).

It belongs to the IL-10 family. In terms of assembly, homodimer. Interacts with IL10RA and IL10RB.

The protein localises to the secreted. Functionally, major immune regulatory cytokine that acts on many cells of the immune system where it has profound anti-inflammatory functions, limiting excessive tissue disruption caused by inflammation. Mechanistically, IL10 binds to its heterotetrameric receptor comprising IL10RA and IL10RB leading to JAK1 and STAT2-mediated phosphorylation of STAT3. In turn, STAT3 translocates to the nucleus where it drives expression of anti-inflammatory mediators. Targets antigen-presenting cells (APCs) such as macrophages and monocytes and inhibits their release of pro-inflammatory cytokines including granulocyte-macrophage colony-stimulating factor /GM-CSF, granulocyte colony-stimulating factor/G-CSF, IL-1 alpha, IL-1 beta, IL-6, IL-8 and TNF-alpha. Also interferes with antigen presentation by reducing the expression of MHC-class II and co-stimulatory molecules, thereby inhibiting their ability to induce T cell activation. In addition, controls the inflammatory response of macrophages by reprogramming essential metabolic pathways including mTOR signaling. This is Interleukin-10 (IL10) from Felis catus (Cat).